A 156-amino-acid polypeptide reads, in one-letter code: Phosphoribosyl-AMP cyclohydrolase (156 aa).

Residue Asp-106 participates in Mg(2+) binding. Cys-107 is a Zn(2+) binding site. Mg(2+) contacts are provided by Asp-108 and Asp-110. Positions 123 and 130 each coordinate Zn(2+).

It belongs to the PRA-CH family. Homodimer. Mg(2+) is required as a cofactor. The cofactor is Zn(2+).

It is found in the cytoplasm. It carries out the reaction 1-(5-phospho-beta-D-ribosyl)-5'-AMP + H2O = 1-(5-phospho-beta-D-ribosyl)-5-[(5-phospho-beta-D-ribosylamino)methylideneamino]imidazole-4-carboxamide. It functions in the pathway amino-acid biosynthesis; L-histidine biosynthesis; L-histidine from 5-phospho-alpha-D-ribose 1-diphosphate: step 3/9. Its function is as follows. Catalyzes the hydrolysis of the adenine ring of phosphoribosyl-AMP. This is Phosphoribosyl-AMP cyclohydrolase from Gluconobacter oxydans (strain 621H) (Gluconobacter suboxydans).